Reading from the N-terminus, the 338-residue chain is MIHKNWAELIKPTQLVVKPGADPARVATVIAEPLERGFGLTLGNALRRVLLSSLQGAAITSVQIDNVLHEFSSVAGVREDVTDIVLNLKGVSIKMEVEGPKRLSISAKGPGVVTAGDISESNGIEILNKDHVICHLDEGADVFMELTVNTGKGYVAADKNRPEDAPIGLIPIDAIYSPVKKVSYEVTPTREGQVLDYDKLTMRIETDGGLTPDDAVAYAARILQDQLSIFVNFEEPESATRHDVEDGLEFNPLLLKKVDELELSVRSANCLKNDNIVYIGDLIQKTEAEMLRTPNFGRKSLNEIKEVLSGMGLHLGMDVEDWPPENIEDLAKRFEDQF.

Positions 1–234 (MIHKNWAELI…DQLSIFVNFE (234 aa)) are alpha N-terminal domain (alpha-NTD). Positions 250 to 338 (FNPLLLKKVD…DLAKRFEDQF (89 aa)) are alpha C-terminal domain (alpha-CTD).

The protein belongs to the RNA polymerase alpha chain family. Homodimer. The RNAP catalytic core consists of 2 alpha, 1 beta, 1 beta' and 1 omega subunit. When a sigma factor is associated with the core the holoenzyme is formed, which can initiate transcription.

It carries out the reaction RNA(n) + a ribonucleoside 5'-triphosphate = RNA(n+1) + diphosphate. In terms of biological role, DNA-dependent RNA polymerase catalyzes the transcription of DNA into RNA using the four ribonucleoside triphosphates as substrates. The chain is DNA-directed RNA polymerase subunit alpha from Cereibacter sphaeroides (strain ATCC 17029 / ATH 2.4.9) (Rhodobacter sphaeroides).